A 391-amino-acid polypeptide reads, in one-letter code: Phosphoglycerate kinase (391 aa).

Substrate contacts are provided by residues Asp-21–Asn-23, Arg-36, His-59–Arg-62, Arg-113, and Arg-146. ATP contacts are provided by residues Lys-197, Glu-319, and Gly-345–Thr-348.

Belongs to the phosphoglycerate kinase family. As to quaternary structure, monomer.

The protein resides in the cytoplasm. The catalysed reaction is (2R)-3-phosphoglycerate + ATP = (2R)-3-phospho-glyceroyl phosphate + ADP. It functions in the pathway carbohydrate degradation; glycolysis; pyruvate from D-glyceraldehyde 3-phosphate: step 2/5. The sequence is that of Phosphoglycerate kinase from Shewanella woodyi (strain ATCC 51908 / MS32).